The following is a 433-amino-acid chain: PC-esterase domain-containing protein 1B (433 aa).

The segment at 386 to 433 (PPCHQRQAPVVHRGFPRHFARGPYSNPWRDRPRRPPKHSPAGLESRPQ) is disordered.

Belongs to the PC-esterase family.

The chain is PC-esterase domain-containing protein 1B (Pced1b) from Mus musculus (Mouse).